Reading from the N-terminus, the 197-residue chain is Guanylate kinase (197 aa).

The interval 1–30 (MAATPRGTSPVPPDARPRLTVLSGPSGVGK) is disordered. In terms of domain architecture, Guanylate kinase-like spans 17 to 197 (PRLTVLSGPS…RELLALTNVV (181 aa)). 24–31 (GPSGVGKS) contacts ATP.

It belongs to the guanylate kinase family.

The protein resides in the cytoplasm. It catalyses the reaction GMP + ATP = GDP + ADP. Essential for recycling GMP and indirectly, cGMP. This Streptomyces coelicolor (strain ATCC BAA-471 / A3(2) / M145) protein is Guanylate kinase (gmk).